The chain runs to 269 residues: MGKKDKRWVMQRKNDFYYKLAKQNHYRSRASYKLLQLNEKFEIIYEGDNVVDLGCAPGGWLQASYDLVGEDGFVIGVDLQKVKPLREENIVAIQGDMTKKETINKIIDLMPSKADVVICDASPNISGVWEVDHSRSIELSLMALIATTHLLRKNGNFVVKVFQGSLFDQYVQLLTKYFKKVQTTKPKASRSVSAEVYVIGKKFLGKKFDKNTDFPIIKLIEDNEFLDRYIEETHEKKEGNETSDNDEDNNKNGLMIKKIKELRGKRSKL.

S-adenosyl-L-methionine is bound by residues glycine 58, tryptophan 60, aspartate 78, aspartate 96, and aspartate 120. The Proton acceptor role is filled by lysine 160. The disordered stretch occupies residues 234-269 (HEKKEGNETSDNDEDNNKNGLMIKKIKELRGKRSKL). The span at 258–269 (KIKELRGKRSKL) shows a compositional bias: basic and acidic residues.

The protein belongs to the class I-like SAM-binding methyltransferase superfamily. RNA methyltransferase RlmE family.

The protein localises to the cytoplasm. It carries out the reaction uridine(2552) in 23S rRNA + S-adenosyl-L-methionine = 2'-O-methyluridine(2552) in 23S rRNA + S-adenosyl-L-homocysteine + H(+). In terms of biological role, specifically methylates the uridine in position 2552 of 23S rRNA at the 2'-O position of the ribose in the fully assembled 50S ribosomal subunit. The protein is Ribosomal RNA large subunit methyltransferase E of Methanococcus aeolicus (strain ATCC BAA-1280 / DSM 17508 / OCM 812 / Nankai-3).